A 400-amino-acid chain; its full sequence is Na(+)/H(+) antiporter NhaA (400 aa).

Transmembrane regions (helical) follow at residues 18 to 38, 68 to 88, 105 to 125, 133 to 153, 163 to 183, 186 to 206, 211 to 231, 232 to 252, 267 to 287, 305 to 325, 338 to 358, and 372 to 392; these read LATEAAGGVLLMFTAALAIII, VHMWINDGLMAIFFLLVGLEI, LPALPALMGMAVPALIYLAVS, GGWAIPAATDIAFAVGALALL, VMLVSVAIIDDMGAVAIIAVF, SSINLLALAGAAGIVAVLLAF, VVALWPYLIGVAALWYVTLLS, GVHATIAGVVGALLIPYSAGS, GLAPWVGFLIVPAFGFANAGV, IALGLLLGKQLGVFAGVLLAV, WLQIYGVAMLCGIGFTMSLFI, and AAKIGILLGSLLSAVIACVIL.

This sequence belongs to the NhaA Na(+)/H(+) (TC 2.A.33) antiporter family.

The protein localises to the cell inner membrane. The catalysed reaction is Na(+)(in) + 2 H(+)(out) = Na(+)(out) + 2 H(+)(in). In terms of biological role, na(+)/H(+) antiporter that extrudes sodium in exchange for external protons. In Pseudomonas entomophila (strain L48), this protein is Na(+)/H(+) antiporter NhaA.